The following is a 405-amino-acid chain: L-rhamnonate dehydratase (405 aa).

Positions 33 and 59 each coordinate substrate. Mg(2+)-binding residues include aspartate 226, glutamate 252, and glutamate 280. Histidine 329 functions as the Proton acceptor in the catalytic mechanism. Glutamate 349 lines the substrate pocket.

The protein belongs to the mandelate racemase/muconate lactonizing enzyme family. RhamD subfamily. In terms of assembly, homooctamer; tetramer of dimers. It depends on Mg(2+) as a cofactor.

It carries out the reaction L-rhamnonate = 2-dehydro-3-deoxy-L-rhamnonate + H2O. In terms of biological role, catalyzes the dehydration of L-rhamnonate to 2-keto-3-deoxy-L-rhamnonate (KDR). The polypeptide is L-rhamnonate dehydratase (Escherichia coli (strain K12 / DH10B)).